A 361-amino-acid polypeptide reads, in one-letter code: Phospho-N-acetylmuramoyl-pentapeptide-transferase (361 aa).

Helical transmembrane passes span 28–48 (LAAL…IRSL), 73–93 (TMGG…WADL), 97–117 (YIWL…VDDY), 134–154 (FFWQ…TAEL), 168–188 (VAIP…IVGS), 200–220 (GLAI…AYVA), 237–257 (AGEL…FLWF), 264–284 (VFMG…ITVI), 289–309 (IVLV…MIQV), and 338–358 (QVVV…LSTL).

This sequence belongs to the glycosyltransferase 4 family. MraY subfamily. Requires Mg(2+) as cofactor.

Its subcellular location is the cell inner membrane. The enzyme catalyses UDP-N-acetyl-alpha-D-muramoyl-L-alanyl-gamma-D-glutamyl-meso-2,6-diaminopimeloyl-D-alanyl-D-alanine + di-trans,octa-cis-undecaprenyl phosphate = di-trans,octa-cis-undecaprenyl diphospho-N-acetyl-alpha-D-muramoyl-L-alanyl-D-glutamyl-meso-2,6-diaminopimeloyl-D-alanyl-D-alanine + UMP. The protein operates within cell wall biogenesis; peptidoglycan biosynthesis. Its function is as follows. Catalyzes the initial step of the lipid cycle reactions in the biosynthesis of the cell wall peptidoglycan: transfers peptidoglycan precursor phospho-MurNAc-pentapeptide from UDP-MurNAc-pentapeptide onto the lipid carrier undecaprenyl phosphate, yielding undecaprenyl-pyrophosphoryl-MurNAc-pentapeptide, known as lipid I. The sequence is that of Phospho-N-acetylmuramoyl-pentapeptide-transferase from Nitrosomonas eutropha (strain DSM 101675 / C91 / Nm57).